A 63-amino-acid chain; its full sequence is Small ribosomal subunit protein bS21 (63 aa).

The protein belongs to the bacterial ribosomal protein bS21 family.

In Porphyromonas gingivalis (strain ATCC BAA-308 / W83), this protein is Small ribosomal subunit protein bS21.